The sequence spans 1541 residues: Regulator of G-protein signaling loco (1541 aa).

The interval 1 to 66 (MHHHHPPLPI…RRKKRANYNY (66 aa)) is disordered. Positions 11–36 (TGASGSTAVGTGAAAAEDASPAANSG) are enriched in low complexity. Polar residues predominate over residues 40–53 (ISTSTTPSGSNSQQ). Residues 71–148 (TVEVRRGYNG…SIRMQIAENY (78 aa)) form the PDZ domain. Positions 182–222 (AKLHRLRNSPQKKLNPPEAVEPHKSKSSPDHPTLKPVLEDP) are disordered. The span at 201–214 (VEPHKSKSSPDHPT) shows a compositional bias: basic and acidic residues. Residues 247–423 (AALECRVIVG…VVNLVRSMYT (177 aa)) form the PID domain. Disordered stretches follow at residues 449–473 (GAVA…SNSD) and 708–761 (SEPD…ASMN). 2 stretches are compositionally biased toward polar residues: residues 457–473 (PQPS…SNSD) and 744–761 (EQQQ…ASMN). In terms of domain architecture, RGS spans 827-943 (SFERMLQDAA…IRSDLYKSCV (117 aa)). A disordered region spans residues 978-1004 (SASNAEDRRRKSLLPWHRKTRSKSRDR). A compositionally biased stretch (basic residues) spans 987-999 (RKSLLPWHRKTRS). RBD domains lie at 1072-1142 (SLCR…IERR) and 1143-1213 (VAFK…IVMV). A disordered region spans residues 1258-1327 (DAAASEKSRP…SEEAATTQAV (70 aa)). Positions 1273-1285 (MKSNEAPSETSSL) are enriched in polar residues. The span at 1312 to 1325 (TSSSQQSEEAATTQ) shows a compositional bias: low complexity. The region spanning 1354-1376 (QDELLEGLKRAQLARLEDQRGTE) is the GoLoco domain. A disordered region spans residues 1410–1513 (KVPATPTEIP…ASKPGTFASK (104 aa)). Over residues 1460–1469 (APPPLPPKPK) the composition is skewed to pro residues. Positions 1483-1499 (PTGNYCNKYSPSKQVPT) are enriched in polar residues.

In terms of assembly, interacts (via GoLoco and RGS domains) with Galphai (via GDP- or GTP-bound forms). In terms of tissue distribution, expressed in surface and longitudinal glial cells, gut and heart (at protein level).

It localises to the cytoplasm. The protein localises to the cell membrane. Its subcellular location is the apical cell membrane. Its function is as follows. Acts as a regulator of G protein signaling (RGS). Modulates G protein alpha subunits nucleotide exchange and hydrolysis activities by functioning either as a GTPase-activating protein (GAP), thereby driving G protein alpha subunits into their inactive GDP-bound form, or as a GDP-dissociation inhibitor (GDI). Confers GDI and GAP activities on G(i) alpha subunit Galphai. Confers GAP activity on G(o)-alpha subunit Galphao and G(i) alpha subunit Galphai. Involved in the dorsal-ventral axis formation of the egg. Acts as a G-protein signaling for glial cell differentiation during embryogenesis; Galphai, Galphao and the G-protein coupled receptor, moody, are required in the surface glia to achieve effective insulation of the nerve cord. May be essential for nurse cell dumping during oogenesis. Required in neuroblast asymmetrical cell division. Plays a role in stress resistance and life span control. The chain is Regulator of G-protein signaling loco (loco) from Drosophila melanogaster (Fruit fly).